We begin with the raw amino-acid sequence, 263 residues long: Shikimate dehydrogenase (NADP(+)) (263 aa).

Shikimate-binding positions include 16–18 (SKS) and Thr65. Lys69 functions as the Proton acceptor in the catalytic mechanism. The shikimate site is built by Asn90 and Asp105. NADP(+)-binding positions include 125-129 (GSGGS) and Leu208. Position 210 (Tyr210) interacts with shikimate. Gly230 lines the NADP(+) pocket.

This sequence belongs to the shikimate dehydrogenase family. In terms of assembly, homodimer.

It carries out the reaction shikimate + NADP(+) = 3-dehydroshikimate + NADPH + H(+). It participates in metabolic intermediate biosynthesis; chorismate biosynthesis; chorismate from D-erythrose 4-phosphate and phosphoenolpyruvate: step 4/7. Functionally, involved in the biosynthesis of the chorismate, which leads to the biosynthesis of aromatic amino acids. Catalyzes the reversible NADPH linked reduction of 3-dehydroshikimate (DHSA) to yield shikimate (SA). The chain is Shikimate dehydrogenase (NADP(+)) from Helicobacter pylori (strain P12).